The sequence spans 335 residues: Phenylalanine--tRNA ligase alpha subunit (335 aa).

A Mg(2+)-binding site is contributed by E262.

It belongs to the class-II aminoacyl-tRNA synthetase family. Phe-tRNA synthetase alpha subunit type 1 subfamily. In terms of assembly, tetramer of two alpha and two beta subunits. Mg(2+) is required as a cofactor.

It is found in the cytoplasm. The catalysed reaction is tRNA(Phe) + L-phenylalanine + ATP = L-phenylalanyl-tRNA(Phe) + AMP + diphosphate + H(+). The protein is Phenylalanine--tRNA ligase alpha subunit of Prochlorococcus marinus (strain NATL2A).